The following is a 496-amino-acid chain: L-arabinose isomerase (496 aa).

Residues E306, E331, H348, and H447 each coordinate Mn(2+).

Belongs to the arabinose isomerase family. The cofactor is Mn(2+).

It carries out the reaction beta-L-arabinopyranose = L-ribulose. The protein operates within carbohydrate degradation; L-arabinose degradation via L-ribulose; D-xylulose 5-phosphate from L-arabinose (bacterial route): step 1/3. Functionally, catalyzes the conversion of L-arabinose to L-ribulose. This chain is L-arabinose isomerase, found in Geobacillus thermodenitrificans (strain NG80-2).